The following is a 317-amino-acid chain: Xylose/arabinose import permease protein XacH (317 aa).

The next 6 helical transmembrane spans lie at 40–60, 98–118, 132–152, 179–199, 241–261, and 290–310; these read GIPF…NFAI, LVLL…LAIL, VYLL…LWMF, IALG…TMVV, AAVV…ALVG, and AAIA…YLYY. The 216-residue stretch at 94 to 309 folds into the ABC transmembrane type-1 domain; that stretch reads AQNNLVLLVG…ALGVIGPYLY (216 aa).

Belongs to the binding-protein-dependent transport system permease family. The complex is composed of two ATP-binding proteins (XacJ and XacK), two transmembrane proteins (XacH and XacI) and a solute-binding protein (XacG).

The protein resides in the cell membrane. Its function is as follows. Part of the ABC transporter complex XacGHIJK involved in the uptake of xylose and arabinose. Responsible for the translocation of the substrate across the membrane. The polypeptide is Xylose/arabinose import permease protein XacH (Haloferax volcanii (strain ATCC 29605 / DSM 3757 / JCM 8879 / NBRC 14742 / NCIMB 2012 / VKM B-1768 / DS2) (Halobacterium volcanii)).